Here is a 110-residue protein sequence, read N- to C-terminus: UPF0213 protein DP2720 (110 aa).

Residues 12 to 88 (PAWFVYIVQC…KQLSPTRKRT (77 aa)) enclose the GIY-YIG domain.

Belongs to the UPF0213 family.

The protein is UPF0213 protein DP2720 of Desulfotalea psychrophila (strain LSv54 / DSM 12343).